Consider the following 146-residue polypeptide: Late protein H7 (146 aa).

A helical transmembrane segment spans residues 10-32 (LAMTAFFGELNTLDIMALIMSIF).

The protein belongs to the chordopoxvirinae H7 family.

The protein resides in the membrane. In terms of biological role, contributes to the formation of crescents and immature virions (IV). In Vaccinia virus (strain Tian Tan) (VACV), this protein is Late protein H7.